A 192-amino-acid chain; its full sequence is Fe/S biogenesis protein NfuA (192 aa).

Residues C149 and C152 each contribute to the [4Fe-4S] cluster site.

Belongs to the NfuA family. Homodimer. [4Fe-4S] cluster is required as a cofactor.

Functionally, involved in iron-sulfur cluster biogenesis. Binds a 4Fe-4S cluster, can transfer this cluster to apoproteins, and thereby intervenes in the maturation of Fe/S proteins. Could also act as a scaffold/chaperone for damaged Fe/S proteins. The sequence is that of Fe/S biogenesis protein NfuA from Alteromonas mediterranea (strain DSM 17117 / CIP 110805 / LMG 28347 / Deep ecotype).